We begin with the raw amino-acid sequence, 690 residues long: SWI/SNF-related matrix-associated actin-dependent regulator of chromatin subfamily A-like protein 1 homolog (690 aa).

Positions 30–49 (MQAAANATASTSSAAPPAPP) are disordered. Low complexity predominate over residues 31–44 (QAAANATASTSSAA). Residues 92-170 (PTSLIKPTIG…AVKVELEPLP (79 aa)) enclose the HARP domain. The 159-residue stretch at 209–367 (IFALERDGRI…FTQIRLIDHK (159 aa)) folds into the Helicase ATP-binding domain. 222–229 (DEMGLGKS) provides a ligand contact to ATP. The short motif at 316 to 319 (DESH) is the DESH box element. Positions 411-428 (RRLKADVLKDLPEKRREV) match the Nuclear localization signal motif. A Helicase C-terminal domain is found at 482-639 (ILENYFYPDA…TFRTADKMHL (158 aa)).

This sequence belongs to the SNF2/RAD54 helicase family. SMARCAL1 subfamily.

It is found in the nucleus. It carries out the reaction ATP + H2O = ADP + phosphate + H(+). In terms of biological role, ATP-dependent annealing helicase that catalyzes the rewinding of the stably unwound DNA. The polypeptide is SWI/SNF-related matrix-associated actin-dependent regulator of chromatin subfamily A-like protein 1 homolog (Caenorhabditis elegans).